Consider the following 99-residue polypeptide: Malonate decarboxylase acyl carrier protein (99 aa).

At Ser-25 the chain carries O-(phosphoribosyl dephospho-coenzyme A)serine.

It belongs to the MdcC family. Post-translationally, covalently binds the prosthetic group of malonate decarboxylase.

The protein localises to the cytoplasm. Functionally, subunit of malonate decarboxylase, it is an acyl carrier protein to which acetyl and malonyl thioester residues are bound via a 2'-(5''-phosphoribosyl)-3'-dephospho-CoA prosthetic group and turn over during the catalytic mechanism. The sequence is that of Malonate decarboxylase acyl carrier protein from Pseudomonas fluorescens (strain SBW25).